The following is a 98-amino-acid chain: MALTKAELAEVLFDKYGVSKQDAKVLVEDFFEEIRVALERGEQVKLSGFGNFELRTKNQRPGRNPKTGEEIPISARRVVTFKPGQKFKSRVENAEPED.

The protein belongs to the bacterial histone-like protein family. In terms of assembly, heterodimer of an alpha and a beta chain.

Functionally, this protein is one of the two subunits of integration host factor, a specific DNA-binding protein that functions in genetic recombination as well as in transcriptional and translational control. The chain is Integration host factor subunit alpha from Idiomarina loihiensis (strain ATCC BAA-735 / DSM 15497 / L2-TR).